Consider the following 263-residue polypeptide: uncharacterized protein (263 aa).

A Response regulatory domain is found at 6–121 (TAIIADDEPL…RLQTTCERVK (116 aa)). Aspartate 58 bears the 4-aspartylphosphate mark. Positions 158 to 263 (IKATQGDDIH…RASQSLFKGM (106 aa)) constitute an HTH LytTR-type domain.

This is an uncharacterized protein from Vibrio parahaemolyticus serotype O3:K6 (strain RIMD 2210633).